A 90-amino-acid polypeptide reads, in one-letter code: Progonadoliberin-3 (90 aa).

The signal sequence occupies residues 1–23; the sequence is MEANSRVMVRVLLLALVVQVTLS. Position 24 is a pyrrolidone carboxylic acid (Gln-24). Gly-33 is modified (glycine amide). A disordered region spans residues 56–90; it reads LPEEASAQTQERLRPYNVINDDSSHFDRKKRSPNK.

This sequence belongs to the GnRH family.

The protein localises to the secreted. Stimulates the secretion of gonadotropins. The sequence is that of Progonadoliberin-3 (gnrh3) from Dicentrarchus labrax (European seabass).